Reading from the N-terminus, the 369-residue chain is UPF0284 protein sll1500 (369 aa).

The protein belongs to the UPF0284 family.

The polypeptide is UPF0284 protein sll1500 (Synechocystis sp. (strain ATCC 27184 / PCC 6803 / Kazusa)).